We begin with the raw amino-acid sequence, 141 residues long: MAKKVTAVIKLALQAGKANPAPPVGPALGQHGVNIMAFCKEYNARTQDKAGFVIPVEISVFEDRSFTFITKTPPASVLITKAAGIEKGSGESAKGSVGSIKRSQLEEIAKTKLPDLNCTSIESAMRIIEGTARNMGVAITD.

The protein belongs to the universal ribosomal protein uL11 family. Part of the ribosomal stalk of the 50S ribosomal subunit. Interacts with L10 and the large rRNA to form the base of the stalk. L10 forms an elongated spine to which L12 dimers bind in a sequential fashion forming a multimeric L10(L12)X complex. In terms of processing, one or more lysine residues are methylated.

In terms of biological role, forms part of the ribosomal stalk which helps the ribosome interact with GTP-bound translation factors. The sequence is that of Large ribosomal subunit protein uL11 from Synechococcus sp. (strain WH7803).